Consider the following 465-residue polypeptide: Soluble pyridine nucleotide transhydrogenase (465 aa).

36 to 45 lines the FAD pocket; it reads ERYDNVGGGC.

It belongs to the class-I pyridine nucleotide-disulfide oxidoreductase family. Requires FAD as cofactor.

The protein resides in the cytoplasm. It catalyses the reaction NAD(+) + NADPH = NADH + NADP(+). Conversion of NADPH, generated by peripheral catabolic pathways, to NADH, which can enter the respiratory chain for energy generation. The chain is Soluble pyridine nucleotide transhydrogenase from Sodalis glossinidius (strain morsitans).